The primary structure comprises 508 residues: Maturase K (508 aa).

Belongs to the intron maturase 2 family. MatK subfamily.

It is found in the plastid. It localises to the chloroplast. In terms of biological role, usually encoded in the trnK tRNA gene intron. Probably assists in splicing its own and other chloroplast group II introns. The sequence is that of Maturase K from Gordonia lasianthus (Loblolly bay).